A 219-amino-acid polypeptide reads, in one-letter code: Protein-methionine-sulfoxide reductase heme-binding subunit MsrQ (219 aa).

5 helical membrane-spanning segments follow: residues 17–37 (AKPL…YAAW), 88–108 (LFAY…DMGF), 121–141 (PFIL…ATSF), 153–173 (WQLL…HFFW), and 184–204 (VFVY…NHWA).

Belongs to the MsrQ family. In terms of assembly, heterodimer of a catalytic subunit (MsrP) and a heme-binding subunit (MsrQ). It depends on FMN as a cofactor. The cofactor is heme b.

The protein resides in the cell inner membrane. Functionally, part of the MsrPQ system that repairs oxidized periplasmic proteins containing methionine sulfoxide residues (Met-O), using respiratory chain electrons. Thus protects these proteins from oxidative-stress damage caused by reactive species of oxygen and chlorine generated by the host defense mechanisms. MsrPQ is essential for the maintenance of envelope integrity under bleach stress, rescuing a wide series of structurally unrelated periplasmic proteins from methionine oxidation. MsrQ provides electrons for reduction to the reductase catalytic subunit MsrP, using the quinone pool of the respiratory chain. In Polaromonas naphthalenivorans (strain CJ2), this protein is Protein-methionine-sulfoxide reductase heme-binding subunit MsrQ.